The primary structure comprises 154 residues: UPF0225 protein Spro_2712 (154 aa).

Belongs to the UPF0225 family.

This Serratia proteamaculans (strain 568) protein is UPF0225 protein Spro_2712.